A 60-amino-acid chain; its full sequence is DNA-directed RNA polymerase subunit Rpo6 (60 aa).

The protein belongs to the archaeal Rpo6/eukaryotic RPB6 RNA polymerase subunit family. Part of the RNA polymerase complex.

It is found in the cytoplasm. The enzyme catalyses RNA(n) + a ribonucleoside 5'-triphosphate = RNA(n+1) + diphosphate. Functionally, DNA-dependent RNA polymerase (RNAP) catalyzes the transcription of DNA into RNA using the four ribonucleoside triphosphates as substrates. This chain is DNA-directed RNA polymerase subunit Rpo6, found in Halobacterium salinarum (strain ATCC 700922 / JCM 11081 / NRC-1) (Halobacterium halobium).